A 152-amino-acid chain; its full sequence is MDEQEIQRLVEEVSLQYFEMPFLHKAVFNNRLRTTGGRYLLKSHNIELNYRYYELYGEEELVGIIKHELCHYHLHIAGRGYKHGDRDFRELLKKVDAPRFCKRMINEEKEKKIYKYECMECSLQYVRRRQINIKRYVCGKCKGKLKPISKTS.

In terms of domain architecture, SprT-like spans 7–147 (QRLVEEVSLQ…CGKCKGKLKP (141 aa)). Residue H67 participates in Zn(2+) binding. E68 is an active-site residue. H71 contacts Zn(2+).

It belongs to the SprT family. The cofactor is Zn(2+).

It is found in the cytoplasm. The sequence is that of Protein SprT-like from Bacillus cereus (strain ATCC 14579 / DSM 31 / CCUG 7414 / JCM 2152 / NBRC 15305 / NCIMB 9373 / NCTC 2599 / NRRL B-3711).